A 115-amino-acid polypeptide reads, in one-letter code: Large ribosomal subunit protein uL22 (115 aa).

This sequence belongs to the universal ribosomal protein uL22 family. In terms of assembly, part of the 50S ribosomal subunit.

This protein binds specifically to 23S rRNA; its binding is stimulated by other ribosomal proteins, e.g. L4, L17, and L20. It is important during the early stages of 50S assembly. It makes multiple contacts with different domains of the 23S rRNA in the assembled 50S subunit and ribosome. In terms of biological role, the globular domain of the protein is located near the polypeptide exit tunnel on the outside of the subunit, while an extended beta-hairpin is found that lines the wall of the exit tunnel in the center of the 70S ribosome. This is Large ribosomal subunit protein uL22 from Endomicrobium trichonymphae.